The chain runs to 619 residues: Chaperone protein HscA homolog (619 aa).

It belongs to the heat shock protein 70 family.

Its function is as follows. Chaperone involved in the maturation of iron-sulfur cluster-containing proteins. Has a low intrinsic ATPase activity which is markedly stimulated by HscB. The sequence is that of Chaperone protein HscA homolog from Haemophilus influenzae (strain PittEE).